The sequence spans 681 residues: MPKKKEDSQKTLSEKEAKGLIAKLSDEIRHHQYLYYVKNDPKISDFDFDQLFRRLQDLEEEFPQFKDLASPTLVVGSDLDKDFEKFQHKLPVLSLINTYNDNELLEWVNKTDPEGLYSVEWKIDGASIVLYYENGILKNGVTRGSGGIGDDVTDNIRTIRNIPLRLPKPITVYLRGEVFMTFKDFEEFNALSSGKYANPRNLSAGSIKQKNSSDTAKRPLRIFTYDATFPNMEKKFKTHQEIFSKLEKLTFPVPPNTAFVSGSKIAKTIQEFKKQKDSLGFPTDGLVIKLNDISKRDALGYTSHSPRWARAYKFDAIMKESKIVDITYAVGRTGKITPRAEIEPISLAGTTVTFATLHNQDYIDELGVGIGAIVRVAKRGEIIPAVEEVVTPGKEVFKIPDRCPSCNTQTIKKESLVDLFCPNPDCPDRVKNGIIFYCQRKQMDIEGLGDKQIEFLYDHDYIKSIADLYDLKDQKEKLMEEEGFGEKSVNIILKGIEQSKQKDFRFLLPSLGLSELGHKVTELLIEHGIDSIDEILSIAKDQKKIESLLEIPGIGPSTIQAFQENFSDKRILKLIERLKKAGLKMKADPIQVADQQPFAGQSWCVTGSFENFQPRDKAMDLIVYYGGRKVSAVSSKTTHLLAGPGAGSKLEKANELGVSVYDEKQFLDLLKSLKIDFKNLI.

NAD(+) is bound by residues 45 to 49, 94 to 95, and Glu-120; these read DFDFD and SL. The active-site N6-AMP-lysine intermediate is the Lys-122. NAD(+) is bound by residues Arg-143, Glu-177, Lys-289, and Lys-313. Zn(2+) contacts are provided by Cys-403, Cys-406, Cys-421, and Cys-426. The BRCT domain occupies 593 to 681; sequence ADQQPFAGQS…SLKIDFKNLI (89 aa).

The protein belongs to the NAD-dependent DNA ligase family. LigA subfamily. Requires Mg(2+) as cofactor. Mn(2+) serves as cofactor.

It carries out the reaction NAD(+) + (deoxyribonucleotide)n-3'-hydroxyl + 5'-phospho-(deoxyribonucleotide)m = (deoxyribonucleotide)n+m + AMP + beta-nicotinamide D-nucleotide.. Functionally, DNA ligase that catalyzes the formation of phosphodiester linkages between 5'-phosphoryl and 3'-hydroxyl groups in double-stranded DNA using NAD as a coenzyme and as the energy source for the reaction. It is essential for DNA replication and repair of damaged DNA. This chain is DNA ligase, found in Leptospira interrogans serogroup Icterohaemorrhagiae serovar Lai (strain 56601).